A 373-amino-acid chain; its full sequence is Dual-specificity RNA methyltransferase RlmN (373 aa).

The active-site Proton acceptor is Glu94. The 240-residue stretch at 100 to 339 (EDDRATLCVS…VIVRKTRGDD (240 aa)) folds into the Radical SAM core domain. A disulfide bond links Cys107 and Cys344. 3 residues coordinate [4Fe-4S] cluster: Cys114, Cys118, and Cys121. Residues 168–169 (GE), Ser200, 222–224 (SIH), and Asn301 each bind S-adenosyl-L-methionine. Cys344 (S-methylcysteine intermediate) is an active-site residue.

It belongs to the radical SAM superfamily. RlmN family. [4Fe-4S] cluster serves as cofactor.

The protein localises to the cytoplasm. The catalysed reaction is adenosine(2503) in 23S rRNA + 2 reduced [2Fe-2S]-[ferredoxin] + 2 S-adenosyl-L-methionine = 2-methyladenosine(2503) in 23S rRNA + 5'-deoxyadenosine + L-methionine + 2 oxidized [2Fe-2S]-[ferredoxin] + S-adenosyl-L-homocysteine. It catalyses the reaction adenosine(37) in tRNA + 2 reduced [2Fe-2S]-[ferredoxin] + 2 S-adenosyl-L-methionine = 2-methyladenosine(37) in tRNA + 5'-deoxyadenosine + L-methionine + 2 oxidized [2Fe-2S]-[ferredoxin] + S-adenosyl-L-homocysteine. Functionally, specifically methylates position 2 of adenine 2503 in 23S rRNA and position 2 of adenine 37 in tRNAs. m2A2503 modification seems to play a crucial role in the proofreading step occurring at the peptidyl transferase center and thus would serve to optimize ribosomal fidelity. The polypeptide is Dual-specificity RNA methyltransferase RlmN (Shewanella amazonensis (strain ATCC BAA-1098 / SB2B)).